Consider the following 212-residue polypeptide: Regulatory protein RecX (212 aa).

The protein belongs to the RecX family.

It is found in the cytoplasm. Functionally, modulates RecA activity. In Clostridium botulinum (strain Eklund 17B / Type B), this protein is Regulatory protein RecX.